The following is a 936-amino-acid chain: Protein translocase subunit SecA (936 aa).

Residues Gln-87, 105–109 (GEGKT), and Asp-515 each bind ATP. Zn(2+)-binding residues include Cys-920, Cys-922, Cys-931, and His-932.

This sequence belongs to the SecA family. In terms of assembly, monomer and homodimer. Part of the essential Sec protein translocation apparatus which comprises SecA, SecYEG and auxiliary proteins SecDF-YajC and YidC. Zn(2+) serves as cofactor.

It is found in the cell inner membrane. It localises to the cytoplasm. It catalyses the reaction ATP + H2O + cellular proteinSide 1 = ADP + phosphate + cellular proteinSide 2.. Part of the Sec protein translocase complex. Interacts with the SecYEG preprotein conducting channel. Has a central role in coupling the hydrolysis of ATP to the transfer of proteins into and across the cell membrane, serving both as a receptor for the preprotein-SecB complex and as an ATP-driven molecular motor driving the stepwise translocation of polypeptide chains across the membrane. The sequence is that of Protein translocase subunit SecA from Paraburkholderia phymatum (strain DSM 17167 / CIP 108236 / LMG 21445 / STM815) (Burkholderia phymatum).